The primary structure comprises 191 residues: MLSFLSSNISNARQTLAQVLNFALVLSSAFMMWKGLSVFTGSSSPIVVVLSGSMEPAFQRGDLLFLENRRPRAEIGEIVVYNVRGKDIPIVHRVVRTYPEIEGKTKQVKEISDASSTPSNMLLTKGDNNVADDTELYARGQDYLHREEDIVGSVRGYIPMVGYVTIMLSEHPWLKSVLLGIMGVMVMLQRE.

Topologically, residues 1–14 are cytoplasmic; that stretch reads MLSFLSSNISNARQ. Residues 15–33 form a helical; Signal-anchor for type II membrane protein membrane-spanning segment; sequence TLAQVLNFALVLSSAFMMW. At 34 to 191 the chain is on the lumenal side; it reads KGLSVFTGSS…MGVMVMLQRE (158 aa). Catalysis depends on charge relay system residues Ser-53, His-92, and Asp-133. The tract at residues 177 to 188 is C-terminal short (CTS) helix; that stretch reads VLLGIMGVMVML.

The protein belongs to the peptidase S26B family. Component of the signal peptidase complex (SPC) composed of a catalytic subunit SEC11 and three accessory subunits SPC1, SPC2 and SPC3. The complex induces a local thinning of the ER membrane which is used to measure the length of the signal peptide (SP) h-region of protein substrates. This ensures the selectivity of the complex towards h-regions shorter than 18-20 amino acids. SPC associates with the translocon complex.

The protein resides in the endoplasmic reticulum membrane. It catalyses the reaction Cleavage of hydrophobic, N-terminal signal or leader sequences from secreted and periplasmic proteins.. Catalytic component of the signal peptidase complex (SPC) which catalyzes the cleavage of N-terminal signal sequences from nascent proteins as they are translocated into the lumen of the endoplasmic reticulum. Specifically cleaves N-terminal signal peptides that contain a hydrophobic alpha-helix (h-region) shorter than 18-20 amino acids. This chain is Signal peptidase complex catalytic subunit sec11 (sec11), found in Aspergillus terreus (strain NIH 2624 / FGSC A1156).